The chain runs to 66 residues: Sec-independent protein translocase protein TatA (66 aa).

The helical transmembrane segment at 1–21 (MIGGLGMPELIIILVIILIIF) threads the bilayer. Residues 45 to 66 (RDAELNEGDKDDKEKEQEKLDK) are disordered.

The protein belongs to the TatA/E family. The Tat system comprises two distinct complexes: a TatABC complex, containing multiple copies of TatA, TatB and TatC subunits, and a separate TatA complex, containing only TatA subunits. Substrates initially bind to the TatABC complex, which probably triggers association of the separate TatA complex to form the active translocon.

Its subcellular location is the cell inner membrane. Its function is as follows. Part of the twin-arginine translocation (Tat) system that transports large folded proteins containing a characteristic twin-arginine motif in their signal peptide across membranes. TatA could form the protein-conducting channel of the Tat system. The chain is Sec-independent protein translocase protein TatA from Desulforapulum autotrophicum (strain ATCC 43914 / DSM 3382 / VKM B-1955 / HRM2) (Desulfobacterium autotrophicum).